The sequence spans 371 residues: MATFLRPELSNFRAYSTPTSDSLPLELDYLDTNEFPWDLPTALKEVLAQQYVSTLASHRYPDSHHWPLRQAIARYVSEQSPTEISPHQIAVGNGSDELIRSILLATAIGGYGSILVAEPTFSIYGILAQTLGIPVHRATRDPDTFAVEIAAANTLIAQAAPPVRVLFMLQPNSPTGNPLTAAEVDWLRQLPEDILVVIDEAYFEFSGKTLVGDLAAHPNWLILRTFSKAFRLAAHRVGYAIGNAEVIAVLEKVRLPYNLPTFSQVAAQVVLDHRQALLAEIPTVLAQRDRLYKWLQSCPQLHVWPSVANFLFFRLREPQHTPSLWDALRDQGTLVRAIAGGIRVTIGTPAQMERFWQRLQASLNQQKSTDN.

Lysine 228 carries the N6-(pyridoxal phosphate)lysine modification.

The protein belongs to the class-II pyridoxal-phosphate-dependent aminotransferase family. Histidinol-phosphate aminotransferase subfamily. As to quaternary structure, homodimer. It depends on pyridoxal 5'-phosphate as a cofactor.

It carries out the reaction L-histidinol phosphate + 2-oxoglutarate = 3-(imidazol-4-yl)-2-oxopropyl phosphate + L-glutamate. It functions in the pathway amino-acid biosynthesis; L-histidine biosynthesis; L-histidine from 5-phospho-alpha-D-ribose 1-diphosphate: step 7/9. This chain is Histidinol-phosphate aminotransferase, found in Thermosynechococcus vestitus (strain NIES-2133 / IAM M-273 / BP-1).